The primary structure comprises 3744 residues: SAGA complex/NuA4 acetyltransferase complex subunit TRA1 (3744 aa).

Ser-2 is modified (N-acetylserine). HEAT repeat units follow at residues 2-40 (SLTE…LLNS), 46-92 (FFLQ…NQTF), 94-131 (PYAM…SFKS), and 135-172 (DKLD…DLDS). Positions 2–2598 (SLTEQIEQFA…KPYHTRQISS (2597 aa)) are HEAT. Ser-172 is modified (phosphoserine). Basic and acidic residues predominate over residues 185–195 (FSKNDEEKDFP). The tract at residues 185-212 (FSKNDEEKDFPSKQSSTEPRFENSTSSN) is disordered. The span at 196–212 (SKQSSTEPRFENSTSSN) shows a compositional bias: polar residues. HEAT repeat units lie at residues 247-284 (PEFT…ISTE), 319-357 (QDYV…ILST), and 437-477 (KLLL…RFKT). Residues 522–539 (LEPSDDDHLMPQPKKEDI) show a composition bias toward basic and acidic residues. A disordered region spans residues 522–546 (LEPSDDDHLMPQPKKEDINDSPDVE). Ser-542 is modified (phosphoserine). 20 HEAT repeats span residues 588–628 (RTLM…VFSY), 734–771 (PNFA…LSFM), 779–821 (INEV…SIGG), 829–867 (RSIK…TVPV), 870–910 (SVLA…NLTA), 919–958 (PVID…RNRQ), 1074–1112 (NQEN…HFCL), 1188–1225 (SFIP…NVKS), 1283–1320 (KVLE…LTGI), 1369–1408 (TFNE…SEQL), 1435–1472 (NIRI…ENSK), 1476–1512 (ELLQ…LLIA), 1693–1734 (LKLK…RFTE), 1739–1776 (DQNP…SSNK), 1918–1955 (FPIK…VLHE), 2115–2155 (ELGL…LDSE), 2182–2219 (ENLP…AIKA), 2230–2267 (SPGK…FMNF), 2269–2307 (DNIV…ARIT), and 2536–2573 (IISS…SIPK). Positions 2599-3744 (RTNVINMLLD…RTDVNFMPWF (1146 aa)) are head. The FAT domain occupies 2622 to 3177 (LVKYLAISYN…HFQLRTTKED (556 aa)). Residues 3374 to 3732 (FLPTVDFVRG…CIGSAVSPRN (359 aa)) enclose the PI3K/PI4K catalytic domain. Residues 3380-3386 (FVRGTHS) form a G-loop region. The catalytic loop stretch occupies residues 3563–3571 (MINNRTPHK). The segment at 3600-3625 (LKNHDLSLPPDSPIFHNNEPVPFRLT) is activation loop. Positions 3712–3744 (TPTVTTQFILDCIGSAVSPRNLARTDVNFMPWF) constitute an FATC domain.

This sequence belongs to the PI3/PI4-kinase family. TRA1 subfamily. As to quaternary structure, component of the 1.8 MDa SAGA (Spt-Ada-Gcn5 acetyltransferase) complex, which is composed of 19 subunits TRA1, SPT7, TAF5, NGG1/ADA3, SGF73, SPT20/ADA5, SPT8, TAF12, TAF6, HFI1/ADA1, UBP8, GCN5, ADA2, SPT3, SGF29, TAF10, TAF9, SGF11 and SUS1. The SAGA complex is composed of 4 modules, namely the HAT (histone acetyltransferase) module (GCN5, ADA2, NGG1/ADA3 and SGF29), the DUB (deubiquitinating) module (UBP8, SGF11, SGF73 and SUS1), the core or TAF (TBP-associated factor) module (TAF5, TAF6, TAF9, TAF10 and TAF12), and the Tra1 or SPT (Suppressor of Ty) module (TRA1, HFI1/ADA1, SPT3, SPT7, SPT8 and SPT20/ADA5). The Tra1/SPT module binds activators, the core module recruits TBP (TATA-binding protein), the HAT module contains the histone H3 acetyltransferase GCN5, and the DUB module comprises the histone H2B deubiquitinase UBP8. Also identified in an altered form of SAGA, named SALSA (SAGA altered, Spt8 absent) or SLIK (SAGA-like) complex, which contains a C-terminal truncated form of SPT7 and is missing SPT8. However, it has been shown that the SAGA and SAGA-like SALSA/SLIK transcriptional coactivators are structurally and biochemically equivalent. Component of the NuA4 acetyltransferase complex, which consists of the catalytic subunit ESA1 and the 12 non-catalytic subunits ACT1, ARP4, EAF1/VID21, SWC4/EAF2, EAF3, EAF5, EAF6, EAF7, EPL1, TRA1, YAF9 and YNG2. TRA1 is the scaffold subunit for binding to a variety of transcription activators or transcription factors to recruit NuA4 for targeted gene activation. Identified in the Ada.spt complex with NGG1/ADA3 and SPT7.

The protein resides in the nucleus. Its function is as follows. Essential scaffold subunit of the transcription coactivator SAGA complex. SAGA acts as a general cofactor required for essentially all RNA polymerase II transcription. At the promoters, SAGA is required for transcription pre-initiation complex (PIC) recruitment. It influences RNA polymerase II transcriptional activity through different activities such as TBP interaction (via core/TAF module) and promoter selectivity, interaction with transcription activators (via Tra1/SPT module), and chromatin modification through histone acetylation (via HAT module) and deubiquitination (via DUB module). SAGA preferentially acetylates histones H3 (to form H3K9ac, H3K14ac, H3K18ac and H3K23ac) and H2B and deubiquitinates histone H2B. SAGA interacts with DNA via upstream activating sequences (UASs). Also identified in a modified version of SAGA named SALSA or SLIK. The cleavage of SPT7 and the absence of the SPT8 subunit in SLIK neither drive any major conformational differences in its structure compared with SAGA, nor significantly affect HAT, DUB, or DNA-binding activities. Component of the NuA4 histone H4/H2A acetyltransferase involved in transcription and DNA repair. This chain is SAGA complex/NuA4 acetyltransferase complex subunit TRA1, found in Saccharomyces cerevisiae (strain ATCC 204508 / S288c) (Baker's yeast).